The primary structure comprises 157 residues: MRIGNGYDVHRLAPGQKLVLGGVEIPFECGLIGWSDADVLTHAIMDSLLGAAALGDIGLYFPPGDPKFKGISSLKLLEQVTALLAEKGFGIINVDSVIVAEEPKLRGHVDTMRKHLAKAMGIDPGRVGIKASTSEQLGFVGREEGMAAWAVALVDEK.

A divalent metal cation-binding residues include aspartate 8, histidine 10, and histidine 42. 8-10 (DVH) lines the 4-CDP-2-C-methyl-D-erythritol 2-phosphate pocket. 4-CDP-2-C-methyl-D-erythritol 2-phosphate contacts are provided by residues 56–58 (DIG), 132–135 (STSE), phenylalanine 139, and arginine 142.

The protein belongs to the IspF family. As to quaternary structure, homotrimer. A divalent metal cation serves as cofactor.

The catalysed reaction is 4-CDP-2-C-methyl-D-erythritol 2-phosphate = 2-C-methyl-D-erythritol 2,4-cyclic diphosphate + CMP. The protein operates within isoprenoid biosynthesis; isopentenyl diphosphate biosynthesis via DXP pathway; isopentenyl diphosphate from 1-deoxy-D-xylulose 5-phosphate: step 4/6. Its function is as follows. Involved in the biosynthesis of isopentenyl diphosphate (IPP) and dimethylallyl diphosphate (DMAPP), two major building blocks of isoprenoid compounds. Catalyzes the conversion of 4-diphosphocytidyl-2-C-methyl-D-erythritol 2-phosphate (CDP-ME2P) to 2-C-methyl-D-erythritol 2,4-cyclodiphosphate (ME-CPP) with a corresponding release of cytidine 5-monophosphate (CMP). This is 2-C-methyl-D-erythritol 2,4-cyclodiphosphate synthase from Dehalococcoides mccartyi (strain ATCC BAA-2266 / KCTC 15142 / 195) (Dehalococcoides ethenogenes (strain 195)).